Consider the following 300-residue polypeptide: Ribonuclease HIII (300 aa).

In terms of domain architecture, RNase H type-2 spans 83–300; that stretch reads IPIIGSDEVG…THKAQALLTK (218 aa). 3 residues coordinate a divalent metal cation: aspartate 89, glutamate 90, and aspartate 194.

The protein belongs to the RNase HII family. RnhC subfamily. Requires Mn(2+) as cofactor. Mg(2+) serves as cofactor.

The protein localises to the cytoplasm. The enzyme catalyses Endonucleolytic cleavage to 5'-phosphomonoester.. Endonuclease that specifically degrades the RNA of RNA-DNA hybrids. The sequence is that of Ribonuclease HIII from Streptococcus pyogenes serotype M49 (strain NZ131).